The sequence spans 384 residues: S-adenosylmethionine synthase (384 aa).

ATP is bound at residue His15. Asp17 contacts Mg(2+). Position 43 (Glu43) interacts with K(+). Residues Glu56 and Gln99 each contribute to the L-methionine site. The tract at residues 99-109 (QSPDINQGVDR) is flexible loop. ATP-binding positions include 164–166 (DAK), 230–231 (RF), Asp239, 245–246 (RK), Ala262, and Lys266. Asp239 is an L-methionine binding site. Residue Lys270 coordinates L-methionine.

Belongs to the AdoMet synthase family. In terms of assembly, homotetramer; dimer of dimers. Requires Mg(2+) as cofactor. K(+) serves as cofactor.

Its subcellular location is the cytoplasm. It catalyses the reaction L-methionine + ATP + H2O = S-adenosyl-L-methionine + phosphate + diphosphate. Its pathway is amino-acid biosynthesis; S-adenosyl-L-methionine biosynthesis; S-adenosyl-L-methionine from L-methionine: step 1/1. Functionally, catalyzes the formation of S-adenosylmethionine (AdoMet) from methionine and ATP. The overall synthetic reaction is composed of two sequential steps, AdoMet formation and the subsequent tripolyphosphate hydrolysis which occurs prior to release of AdoMet from the enzyme. The polypeptide is S-adenosylmethionine synthase (Serratia proteamaculans (strain 568)).